Consider the following 676-residue polypeptide: Urocanate hydratase (676 aa).

Residues 15–35 (PLPENRGRQAGVPHAPVRTPS) are disordered. NAD(+) contacts are provided by residues 126–127 (GG), Gln204, 251–253 (GMS), Glu271, 317–318 (NV), 343–347 (QTSCH), 354–355 (YY), Tyr403, and Gly594.

The protein belongs to the urocanase family. The cofactor is NAD(+).

The enzyme catalyses 4-imidazolone-5-propanoate = trans-urocanate + H2O. Its pathway is amino-acid degradation; L-histidine degradation into L-glutamate; N-formimidoyl-L-glutamate from L-histidine: step 2/3. The chain is Urocanate hydratase (UROC1) from Homo sapiens (Human).